The primary structure comprises 202 residues: Large ribosomal subunit protein uL5 (202 aa).

Positions 1 to 17 are enriched in low complexity; the sequence is MSAKAATKNATKVAVKA. A disordered region spans residues 1-30; it reads MSAKAATKNATKVAVKAPEATTPVETKKSK.

Belongs to the universal ribosomal protein uL5 family. In terms of assembly, component of the large ribosomal subunit.

The protein resides in the nucleus. It is found in the cytoplasm. Its function is as follows. Component of the ribosome, a large ribonucleoprotein complex responsible for the synthesis of proteins in the cell. The small ribosomal subunit (SSU) binds messenger RNAs (mRNAs) and translates the encoded message by selecting cognate aminoacyl-transfer RNA (tRNA) molecules. The large subunit (LSU) contains the ribosomal catalytic site termed the peptidyl transferase center (PTC), which catalyzes the formation of peptide bonds, thereby polymerizing the amino acids delivered by tRNAs into a polypeptide chain. The nascent polypeptides leave the ribosome through a tunnel in the LSU and interact with protein factors that function in enzymatic processing, targeting, and the membrane insertion of nascent chains at the exit of the ribosomal tunnel. The polypeptide is Large ribosomal subunit protein uL5 (rpl11) (Dictyostelium discoideum (Social amoeba)).